A 527-amino-acid chain; its full sequence is Bifunctional pantoate ligase/cytidylate kinase (527 aa).

The tract at residues 1–277 is pantoate--beta-alanine ligase; the sequence is MRQLISPEAL…VGTARLIDNL (277 aa). 27-34 contributes to the ATP binding site; the sequence is MGALHAGH. Catalysis depends on His34, which acts as the Proton donor. Gln58 is a binding site for (R)-pantoate. Gln58 lines the beta-alanine pocket. 147–150 provides a ligand contact to ATP; the sequence is GEKD. (R)-pantoate is bound at residue Gln153. ATP is bound by residues Val176 and 184–187; that span reads LSSR. Residues 278 to 527 are cytidylate kinase; sequence TLQGRRPIIA…GQTPSPLSLG (250 aa). The disordered stretch occupies residues 507–527; it reads GLGDSSPQATPGQTPSPLSLG. Residues 511-527 are compositionally biased toward polar residues; it reads SSPQATPGQTPSPLSLG.

It in the N-terminal section; belongs to the pantothenate synthetase family. The protein in the C-terminal section; belongs to the cytidylate kinase family. Type 1 subfamily.

The protein resides in the cytoplasm. It carries out the reaction (R)-pantoate + beta-alanine + ATP = (R)-pantothenate + AMP + diphosphate + H(+). The catalysed reaction is CMP + ATP = CDP + ADP. The enzyme catalyses dCMP + ATP = dCDP + ADP. It functions in the pathway cofactor biosynthesis; (R)-pantothenate biosynthesis; (R)-pantothenate from (R)-pantoate and beta-alanine: step 1/1. Its function is as follows. Catalyzes the condensation of pantoate with beta-alanine in an ATP-dependent reaction via a pantoyl-adenylate intermediate. Functionally, catalyzes the transfer of a phosphate group from ATP to either CMP or dCMP to form CDP or dCDP and ADP, respectively. The polypeptide is Bifunctional pantoate ligase/cytidylate kinase (Synechococcus elongatus (strain ATCC 33912 / PCC 7942 / FACHB-805) (Anacystis nidulans R2)).